Consider the following 255-residue polypeptide: 4-hydroxy-tetrahydrodipicolinate reductase (255 aa).

Residues 9–14, 89–91, and 115–118 each bind NAD(+); these read GYRGKM, GTT, and APNF. H145 serves as the catalytic Proton donor/acceptor. (S)-2,3,4,5-tetrahydrodipicolinate is bound at residue H146. K149 functions as the Proton donor in the catalytic mechanism. 155–156 lines the (S)-2,3,4,5-tetrahydrodipicolinate pocket; the sequence is GT.

Belongs to the DapB family.

It is found in the cytoplasm. The enzyme catalyses (S)-2,3,4,5-tetrahydrodipicolinate + NAD(+) + H2O = (2S,4S)-4-hydroxy-2,3,4,5-tetrahydrodipicolinate + NADH + H(+). It catalyses the reaction (S)-2,3,4,5-tetrahydrodipicolinate + NADP(+) + H2O = (2S,4S)-4-hydroxy-2,3,4,5-tetrahydrodipicolinate + NADPH + H(+). The protein operates within amino-acid biosynthesis; L-lysine biosynthesis via DAP pathway; (S)-tetrahydrodipicolinate from L-aspartate: step 4/4. Its function is as follows. Catalyzes the conversion of 4-hydroxy-tetrahydrodipicolinate (HTPA) to tetrahydrodipicolinate. This is 4-hydroxy-tetrahydrodipicolinate reductase from Streptococcus uberis (strain ATCC BAA-854 / 0140J).